Consider the following 657-residue polypeptide: Glycogen debranching enzyme (657 aa).

Asp-334 serves as the catalytic Nucleophile. Glu-369 acts as the Proton donor in catalysis. The disordered stretch occupies residues 458-485; the sequence is ANGEQNRDGTNSNFSFNHGTEGLEADET. Residues 465–475 show a composition bias toward polar residues; sequence DGTNSNFSFNH.

This sequence belongs to the glycosyl hydrolase 13 family.

The protein localises to the cytoplasm. It catalyses the reaction Hydrolysis of (1-&gt;6)-alpha-D-glucosidic linkages to branches with degrees of polymerization of three or four glucose residues in limit dextrin.. Its pathway is glycan degradation; glycogen degradation. Slightly activated by Ca(2+). Inhibited by divalent cations such as Zn(2+), Cu(2+), Fe(2+), Mg(2+), Mn(2+), but only slightly inhibited by EDTA. Functionally, removes maltotriose and maltotetraose chains that are attached by 1,6-alpha-linkage to the limit dextrin main chain, generating a debranched limit dextrin. Hydrolyzes the alpha-1,6-glycosidic linkages in amylopectin while does not hydrolyze the alpha-1,4-glycosidic linkages in amylose. Native glycogen is a poor substrate. This Dickeya chrysanthemi (Pectobacterium chrysanthemi) protein is Glycogen debranching enzyme.